The chain runs to 429 residues: TNFAIP3-interacting protein 2 (429 aa).

Position 7 is a phosphoserine (serine 7). A coiled-coil region spans residues 29 to 117; it reads QRLRRLQDQL…MQQLLSQPQH (89 aa). Residues 177–195 show a composition bias toward basic and acidic residues; it reads HAQRNVGERSPDQSEHTDG. The segment at 177-199 is disordered; the sequence is HAQRNVGERSPDQSEHTDGHTSV. 2 coiled-coil regions span residues 196-226 and 255-340; these read HTSV…LNAK and ELMR…QVSW. Positions 289–347 are ubiquitin-binding domain (UBD); that stretch reads RDAALERVQMLEQQILAYKDDFMSERADRERAQSRIQELEEKVASLLHQVSWRQDSREP. Positions 372 to 400 are disordered; it reads PGGWRPGTGSQQPEPPAEGGHPGAAQRGQ. Residues 388 to 397 show a composition bias toward low complexity; the sequence is AEGGHPGAAQ. Residues 397–429 form a CCHC NOA-type zinc finger; sequence QRGQGDLQCPHCLQCFSDEQGEELLRHVAECCQ. Residues cysteine 405, cysteine 408, histidine 423, and cysteine 427 each coordinate Zn(2+).

In terms of assembly, interacts with STK11/LKB1, TNFAIP3, IKBKG, NFKB1, MAP3K8, TEK, RIPK1, CHUK, IKBKB and SMARCD1. Interacts with polyubiquitin. As to quaternary structure, (Microbial infection) Interacts with severe fever with thrombocytopenia syndrome virus (SFTSV) NSs; this interaction promotes TPL2 complex formation and signaling activity leading to IL-10 production. Post-translationally, in vitro phosphorylated by CHUK. Ubiquitinated; undergoes 'Lys-48'-linked polyubiquitination probably leading to constitutive proteasomal degradation which can be impaired by IKK-A/CHUK or IKBKB probably involving deubiquitination. Deubiquitinated by USP35; leading to stabilization and inhibition of TNFalpha-induced NF-kappa-B activation. Ubiquitously expressed in all tissues examined.

It localises to the cytoplasm. It is found in the nucleus. Functionally, inhibits NF-kappa-B activation by blocking the interaction of RIPK1 with its downstream effector NEMO/IKBKG. Forms a ternary complex with NFKB1 and MAP3K8 but appears to function upstream of MAP3K8 in the TLR4 signaling pathway that regulates MAP3K8 activation. Involved in activation of the MEK/ERK signaling pathway during innate immune response; this function seems to be stimulus- and cell type specific. Required for stability of MAP3K8. Involved in regulation of apoptosis in endothelial cells; promotes TEK agonist-stimulated endothelial survival. May act as transcriptional coactivator when translocated to the nucleus. Enhances CHUK-mediated NF-kappa-B activation involving NF-kappa-B p50-p65 and p50-c-Rel complexes. The polypeptide is TNFAIP3-interacting protein 2 (Homo sapiens (Human)).